A 100-amino-acid chain; its full sequence is Urease subunit gamma (100 aa).

It belongs to the urease gamma subunit family. As to quaternary structure, heterotrimer of UreA (gamma), UreB (beta) and UreC (alpha) subunits. Three heterotrimers associate to form the active enzyme.

Its subcellular location is the cytoplasm. The catalysed reaction is urea + 2 H2O + H(+) = hydrogencarbonate + 2 NH4(+). Its pathway is nitrogen metabolism; urea degradation; CO(2) and NH(3) from urea (urease route): step 1/1. This is Urease subunit gamma from Burkholderia ambifaria (strain MC40-6).